Consider the following 32-residue polypeptide: Calcitonin-2 (32 aa).

An intrachain disulfide couples cysteine 1 to cysteine 7. Proline 32 bears the Proline amide mark.

Belongs to the calcitonin family.

The protein localises to the secreted. In terms of biological role, causes a rapid but short-lived drop in the level of calcium and phosphate in blood by promoting the incorporation of those ions in the bones. This chain is Calcitonin-2, found in Oncorhynchus gorbuscha (Pink salmon).